A 398-amino-acid polypeptide reads, in one-letter code: Secreted aspartic protease 2 (398 aa).

The first 18 residues, methionine 1–alanine 18, serve as a signal peptide directing secretion. The propeptide at threonine 19–arginine 56 is activation peptide. The Peptidase A1 domain maps to tyrosine 70–alanine 384. Aspartate 88 is a catalytic residue. Aspartate 88–glycine 90 contributes to the pepstatin A binding site. Cysteine 103 and cysteine 115 are joined by a disulfide. A pepstatin A-binding site is contributed by glycine 141–aspartate 142. Zn(2+) is bound by residues aspartate 247 and aspartate 270. Aspartate 274 is a catalytic residue. Aspartate 274–threonine 278 is a pepstatin A binding site. An intrachain disulfide couples cysteine 312 to cysteine 350. N-linked (GlcNAc...) asparagine glycosylation is found at asparagine 313 and asparagine 321.

It belongs to the peptidase A1 family. Monomer.

It is found in the secreted. The enzyme catalyses Preferential cleavage at the carboxyl of hydrophobic amino acids, but fails to cleave 15-Leu-|-Tyr-16, 16-Tyr-|-Leu-17 and 24-Phe-|-Phe-25 of insulin B chain. Activates trypsinogen, and degrades keratin.. Functionally, secreted aspartic peptidases (SAPs) are a group of ten acidic hydrolases considered as key virulence factors. These enzymes supply the fungus with nutrient amino acids as well as are able to degrade the selected host's proteins involved in the immune defense. Induces host inflammatory cytokine production in a proteolytic activity-independent way. Plays a role in tissue damage during superficial infection. Moreover, acts toward human hemoglobin though limited proteolysis to generate a variety of antimicrobial hemocidins, enabling to compete with the other microorganisms of the same physiological niche using the microbicidal peptides generated from the host protein. In terms of biological role, plays a key role in defense against host by cleaving histatin-5 (Hst 5), a peptide from human saliva that carries out fungicidal activity. The cleavage rate decreases in an order of SAP2 &gt; SAP9 &gt; SAP3 &gt; SAP7 &gt; SAP4 &gt; SAP1 &gt; SAP8. The first cleavage occurs between residues 'Lys-17' and 'His-18' of Hst 5, giving DSHAKRHHGYKRKFHEK and HHSHRGY peptides. Simultaneously, the DSHAKRHHGYKRK peptide is also formed. Further fragmentation by SAP2 results in FHEK and DSHAKRHHGY products. In Candida albicans (Yeast), this protein is Secreted aspartic protease 2.